The sequence spans 507 residues: Probable DNA ligase (507 aa).

ATP is bound at residue glutamate 209. The active-site N6-AMP-lysine intermediate is lysine 211. ATP contacts are provided by arginine 216, arginine 231, glutamate 260, phenylalanine 295, arginine 366, and lysine 372.

This sequence belongs to the ATP-dependent DNA ligase family. Mg(2+) is required as a cofactor.

The enzyme catalyses ATP + (deoxyribonucleotide)n-3'-hydroxyl + 5'-phospho-(deoxyribonucleotide)m = (deoxyribonucleotide)n+m + AMP + diphosphate.. Its function is as follows. DNA ligase that seals nicks in double-stranded DNA during DNA replication, DNA recombination and DNA repair. In Pseudarthrobacter chlorophenolicus (strain ATCC 700700 / DSM 12829 / CIP 107037 / JCM 12360 / KCTC 9906 / NCIMB 13794 / A6) (Arthrobacter chlorophenolicus), this protein is Probable DNA ligase.